An 872-amino-acid polypeptide reads, in one-letter code: Alanine--tRNA ligase (872 aa).

Residues histidine 566, histidine 570, cysteine 668, and histidine 672 each contribute to the Zn(2+) site.

Belongs to the class-II aminoacyl-tRNA synthetase family. It depends on Zn(2+) as a cofactor.

Its subcellular location is the cytoplasm. The enzyme catalyses tRNA(Ala) + L-alanine + ATP = L-alanyl-tRNA(Ala) + AMP + diphosphate. Catalyzes the attachment of alanine to tRNA(Ala) in a two-step reaction: alanine is first activated by ATP to form Ala-AMP and then transferred to the acceptor end of tRNA(Ala). Also edits incorrectly charged Ser-tRNA(Ala) and Gly-tRNA(Ala) via its editing domain. This is Alanine--tRNA ligase from Lactococcus lactis subsp. cremoris (strain SK11).